The sequence spans 241 residues: Small ribosomal subunit protein uS2 (241 aa).

Belongs to the universal ribosomal protein uS2 family.

This Hamiltonella defensa subsp. Acyrthosiphon pisum (strain 5AT) protein is Small ribosomal subunit protein uS2.